We begin with the raw amino-acid sequence, 561 residues long: uncharacterized protein (561 aa).

The next 2 membrane-spanning stretches (helical) occupy residues 29-49 and 80-100; these read FIFNVGSLTPTTAVLGVKKII and FLFHTVGFFPIYTSTIGAVVI.

Its subcellular location is the cell membrane. This is an uncharacterized protein from Mycoplasma pneumoniae (strain ATCC 29342 / M129 / Subtype 1) (Mycoplasmoides pneumoniae).